We begin with the raw amino-acid sequence, 252 residues long: NADH-quinone oxidoreductase subunit E (252 aa).

The [2Fe-2S] cluster site is built by C114, C119, C155, and C159. A disordered region spans residues 211–252 (LAGLPDQRPDEGQGGPGAPTLAGLQVARKNDMQAPPTPGADE).

The protein belongs to the complex I 24 kDa subunit family. The cofactor is [2Fe-2S] cluster.

The catalysed reaction is a quinone + NADH + 5 H(+)(in) = a quinol + NAD(+) + 4 H(+)(out). NDH-1 shuttles electrons from NADH, via FMN and iron-sulfur (Fe-S) centers, to quinones in the respiratory chain. The immediate electron acceptor for the enzyme in this species is believed to be menaquinone. Couples the redox reaction to proton translocation (for every two electrons transferred, four hydrogen ions are translocated across the cytoplasmic membrane), and thus conserves the redox energy in a proton gradient. This is NADH-quinone oxidoreductase subunit E (nuoE) from Mycobacterium bovis (strain ATCC BAA-935 / AF2122/97).